A 181-amino-acid chain; its full sequence is MAASNALLLISGVLLISLAVLCHGDPVVDSDGDAVQLNLGGNYPLYTIQSAAIGFRGGLSTLHKDACKSYVYEAPETDRGLPVGFSASATSQPVMQLGSRYKFSFSMPVPLICDTAWSIGKSTEETGVYKLAACSCEFCKIACPEVGSFNVNGRTLLGIGGEHFTVRFQKFDALAMKTAPQ.

An N-terminal signal peptide occupies residues 1-24; that stretch reads MAASNALLLISGVLLISLAVLCHG. Disulfide bonds link Cys67–Cys113, Cys134–Cys143, and Cys136–Cys139.

It belongs to the protease inhibitor I3 (leguminous Kunitz-type inhibitor) family.

The protein localises to the secreted. Functionally, possesses two reactive sites. Inhibits an equimolar amount of trypsin and chymotrypsin simultaneously, and inhibits kallikrein weakly. This chain is Proteinase inhibitor A, found in Sagittaria sagittifolia (Arrowhead).